Here is a 240-residue protein sequence, read N- to C-terminus: Probable transcriptional regulatory protein HPP12_0160 (240 aa).

This sequence belongs to the TACO1 family.

It is found in the cytoplasm. In Helicobacter pylori (strain P12), this protein is Probable transcriptional regulatory protein HPP12_0160.